We begin with the raw amino-acid sequence, 247 residues long: Transmembrane protein 33 (247 aa).

Alanine 2 carries the post-translational modification N-acetylalanine. Over 2–31 the chain is Lumenal; sequence ADTTPNGPQGAGAVQFMMTNKLDTAMWLSR. The chain crosses the membrane as a helical span at residues 32 to 52; sequence LFTVYCSALFVLPLLGLHEAA. Residues 53-100 are Cytoplasmic-facing; the sequence is SFYQRALLANALTSALRLHQRLPHFQLSRAFLAQALLEDSCHYLLYSL. The helical transmembrane segment at 101–121 threads the bilayer; that stretch reads IFVNSYPVTMSIFPVLLFSLL. Topologically, residues 122–155 are lumenal; sequence HAATYTKKVLDAKGSNSLPLLRSFLDKLSTNQQN. The helical transmembrane segment at 156–176 threads the bilayer; it reads ILKFIACNEIFLMPATVFMLF. The Cytoplasmic portion of the chain corresponds to 177 to 247; it reads SGQGSLLQPF…FISRLAPTVA (71 aa).

This sequence belongs to the PER33/POM33 family. As to quaternary structure, interacts with EIF2AK3. Interacts with RTN1, RTN2, RTN3, RTN4 and ARL6IP1. Interacts with RNF5. Interacts with RNF26. Interacts with PKD2.

It is found in the endoplasmic reticulum membrane. The protein localises to the melanosome. Its subcellular location is the nucleus envelope. Functionally, acts as a regulator of the tubular endoplasmic reticulum (ER) network by modulating intracellular calcium homeostasis. Mechanistically, stimulates PKD2 calcium-dependent activity. Suppresses the RTN3/4-induced formation of the ER tubules. Positively regulates PERK-mediated and IRE1-mediated unfolded protein response signaling. Plays an essential role in VEGF-mediated release of Ca(2+) from ER stores during angiogenesis. Also plays a role in the modulation of innate immune signaling through the cGAS-STING pathway by interacting with RNF26. Participates in lipid metabolism by acting as a downstream effector of the pyruvate kinase/PKM. Forms a complex with RNF5 to facilitate polyubiquitination and subsequent degradation of SCAP on the ER membrane. This is Transmembrane protein 33 (Tmem33) from Mus musculus (Mouse).